We begin with the raw amino-acid sequence, 294 residues long: Putative lipid kinase SP_1045 (294 aa).

The DAGKc domain maps to 1–131; the sequence is MKKAMVIINP…IDIGKANDNY (131 aa). Residues 9–13, Thr40, 66–72, and Thr93 each bind ATP; these read NPTSG and GDGTVNE. Mg(2+)-binding residues include Asp212 and Tyr214. Asp269 acts as the Proton acceptor in catalysis.

It belongs to the diacylglycerol/lipid kinase family. The cofactor is Mg(2+).

May catalyze the ATP-dependent phosphorylation of lipids other than diacylglycerol (DAG). In fact, is not able to exhibit diacylglycerol kinase activity in vitro. This is Putative lipid kinase SP_1045 from Streptococcus pneumoniae serotype 4 (strain ATCC BAA-334 / TIGR4).